A 225-amino-acid polypeptide reads, in one-letter code: Octanoyltransferase (225 aa).

Residues 43 to 225 form the BPL/LPL catalytic domain; that stretch reads GTAPELVWLL…KTFRDVFGRG (183 aa). Substrate-binding positions include 82–89, 157–159, and 170–172; these read RGGQYTYH, AIG, and GVS. C188 serves as the catalytic Acyl-thioester intermediate.

It belongs to the LipB family.

The protein resides in the cytoplasm. It catalyses the reaction octanoyl-[ACP] + L-lysyl-[protein] = N(6)-octanoyl-L-lysyl-[protein] + holo-[ACP] + H(+). The protein operates within protein modification; protein lipoylation via endogenous pathway; protein N(6)-(lipoyl)lysine from octanoyl-[acyl-carrier-protein]: step 1/2. Catalyzes the transfer of endogenously produced octanoic acid from octanoyl-acyl-carrier-protein onto the lipoyl domains of lipoate-dependent enzymes. Lipoyl-ACP can also act as a substrate although octanoyl-ACP is likely to be the physiological substrate. The protein is Octanoyltransferase of Parvibaculum lavamentivorans (strain DS-1 / DSM 13023 / NCIMB 13966).